The sequence spans 82 residues: Exodeoxyribonuclease 7 small subunit (82 aa).

The protein belongs to the XseB family. In terms of assembly, heterooligomer composed of large and small subunits.

The protein resides in the cytoplasm. The enzyme catalyses Exonucleolytic cleavage in either 5'- to 3'- or 3'- to 5'-direction to yield nucleoside 5'-phosphates.. Bidirectionally degrades single-stranded DNA into large acid-insoluble oligonucleotides, which are then degraded further into small acid-soluble oligonucleotides. This is Exodeoxyribonuclease 7 small subunit from Mycobacterium avium (strain 104).